We begin with the raw amino-acid sequence, 152 residues long: Transcriptional regulator MraZ (152 aa).

SpoVT-AbrB domains follow at residues 5–52 (ATLV…PLPE) and 81–124 (ASEC…DEQT).

Belongs to the MraZ family. In terms of assembly, forms oligomers.

It localises to the cytoplasm. It is found in the nucleoid. In terms of biological role, negatively regulates its own expression and that of the subsequent genes in the proximal part of the division and cell wall (dcw) gene cluster. Acts by binding directly to DNA. May also regulate the expression of genes outside the dcw cluster. The chain is Transcriptional regulator MraZ from Pectobacterium atrosepticum (strain SCRI 1043 / ATCC BAA-672) (Erwinia carotovora subsp. atroseptica).